The primary structure comprises 576 residues: DM7 family protein GD16138 (576 aa).

Residues 454–481 (FPELEPDSEPEPEPEPQTEDEGEDEGDK) are disordered. Positions 457–478 (LEPDSEPEPEPEPQTEDEGEDE) are enriched in acidic residues.

Belongs to the DM7 family.

The chain is DM7 family protein GD16138 from Drosophila simulans (Fruit fly).